A 248-amino-acid chain; its full sequence is Pyridoxine 5'-phosphate synthase (248 aa).

Asparagine 10 contacts 3-amino-2-oxopropyl phosphate. 12–13 is a 1-deoxy-D-xylulose 5-phosphate binding site; the sequence is DH. Arginine 21 lines the 3-amino-2-oxopropyl phosphate pocket. Residue histidine 46 is the Proton acceptor of the active site. Residues arginine 48 and histidine 53 each contribute to the 1-deoxy-D-xylulose 5-phosphate site. The active-site Proton acceptor is the glutamate 73. Threonine 103 provides a ligand contact to 1-deoxy-D-xylulose 5-phosphate. Histidine 194 (proton donor) is an active-site residue. 3-amino-2-oxopropyl phosphate is bound by residues glycine 195 and 216–217; that span reads GH.

It belongs to the PNP synthase family. In terms of assembly, homooctamer; tetramer of dimers.

The protein localises to the cytoplasm. It catalyses the reaction 3-amino-2-oxopropyl phosphate + 1-deoxy-D-xylulose 5-phosphate = pyridoxine 5'-phosphate + phosphate + 2 H2O + H(+). The protein operates within cofactor biosynthesis; pyridoxine 5'-phosphate biosynthesis; pyridoxine 5'-phosphate from D-erythrose 4-phosphate: step 5/5. Functionally, catalyzes the complicated ring closure reaction between the two acyclic compounds 1-deoxy-D-xylulose-5-phosphate (DXP) and 3-amino-2-oxopropyl phosphate (1-amino-acetone-3-phosphate or AAP) to form pyridoxine 5'-phosphate (PNP) and inorganic phosphate. The chain is Pyridoxine 5'-phosphate synthase from Legionella pneumophila (strain Corby).